Reading from the N-terminus, the 345-residue chain is Phosphoribosylformylglycinamidine cyclo-ligase (345 aa).

This sequence belongs to the AIR synthase family.

It localises to the cytoplasm. It catalyses the reaction 2-formamido-N(1)-(5-O-phospho-beta-D-ribosyl)acetamidine + ATP = 5-amino-1-(5-phospho-beta-D-ribosyl)imidazole + ADP + phosphate + H(+). Its pathway is purine metabolism; IMP biosynthesis via de novo pathway; 5-amino-1-(5-phospho-D-ribosyl)imidazole from N(2)-formyl-N(1)-(5-phospho-D-ribosyl)glycinamide: step 2/2. The chain is Phosphoribosylformylglycinamidine cyclo-ligase from Salmonella typhimurium (strain LT2 / SGSC1412 / ATCC 700720).